The following is a 1154-amino-acid chain: Kinesin-like protein KIN-7E, chloroplastic (1154 aa).

2 stretches are compositionally biased toward low complexity: residues 1–14 and 29–109; these read MSSS…SISP and VAAA…PPVA. A chloroplast-targeting transit peptide spans 1–21; the sequence is MSSSSRPGRASISPFRSRRTS. A disordered region spans residues 1–109; it reads MSSSSRPGRA…RAAGRAPPVA (109 aa). One can recognise a Kinesin motor domain in the interval 119 to 437; sequence NIMVTVRFRP…LKFAHRSKHI (319 aa). Residue 199-206 participates in ATP binding; that stretch reads GVTSSGKT. The stretch at 441 to 523 forms a coiled coil; it reads ASQNKIIDEK…AALMGRIQRL (83 aa). The interval 620–674 is disordered; sequence LSTSVDSESTASGSPSFSRSSQQKHPLLDLKDGRRKSMTRKGDDPALTDSFPGRT. Over residues 628-640 the composition is skewed to low complexity; that stretch reads STASGSPSFSRSS. Coiled-coil stretches lie at residues 734–761 and 801–845; these read DSQI…LEQR and ADNR…DNVA. The disordered stretch occupies residues 838-885; it reads AKNEDNVASMQSSEPSSTSSNPRDLANEVASHSKMPSRTTEDHTESPL. Low complexity predominate over residues 846-857; it reads SMQSSEPSSTSS. Positions 894 to 967 form a coiled coil; that stretch reads AEIENLKLDK…DLAAAKDQTR (74 aa).

The protein belongs to the TRAFAC class myosin-kinesin ATPase superfamily. Kinesin family. KIN-7 subfamily.

It localises to the plastid. The protein localises to the chloroplast. In Oryza sativa subsp. japonica (Rice), this protein is Kinesin-like protein KIN-7E, chloroplastic.